A 177-amino-acid chain; its full sequence is MSRVAKAPVNIPAGVQVSLNGQLLTVKGKNSELSRTIHNSVEVKEDNGALTFAPREGFAGADAQAGTARALVNAMVIGVTEGFTKKLQLVGVGYRAQVKGNSISLNLGFSHPVEHTLPAGITAECPSQTEIVLKGADKQLIGQVAADIRAYRKPEPYKGKGVRYADEVVRTKEAKKK.

It belongs to the universal ribosomal protein uL6 family. As to quaternary structure, part of the 50S ribosomal subunit.

Its function is as follows. This protein binds to the 23S rRNA, and is important in its secondary structure. It is located near the subunit interface in the base of the L7/L12 stalk, and near the tRNA binding site of the peptidyltransferase center. This Actinobacillus succinogenes (strain ATCC 55618 / DSM 22257 / CCUG 43843 / 130Z) protein is Large ribosomal subunit protein uL6.